A 290-amino-acid chain; its full sequence is Probable adenylate kinase 2, chloroplastic (290 aa).

Low complexity predominate over residues 1-10; the sequence is MASSMAATAT. A disordered region spans residues 1-37; that stretch reads MASSMAATATLSPPVLSAERPTVRGGLFLPPSPATSR. The transit peptide at 1–61 directs the protein to the chloroplast; it reads MASSMAATAT…ATRKPRSLPR (61 aa). 83–88 is an ATP binding site; sequence ASGKGT. An NMP region spans residues 103–132; the sequence is SAGDLLRAEIAAGSENGKRAKEFMEKGQLV. AMP is bound by residues Arg109, 130-132, 159-162, and Gln166; these read QLV and GYPR. ATP contacts are provided by residues Arg193, Arg197, and 206–207; that span reads IY. Residues 196–229 are LID; that stretch reads GRRLDPVTGKIYHLKYSPPENEEIASRLTQRFDD. Positions 226 and 237 each coordinate AMP.

This sequence belongs to the adenylate kinase family.

It localises to the plastid. Its subcellular location is the chloroplast. It catalyses the reaction AMP + ATP = 2 ADP. Functionally, catalyzes the reversible transfer of the terminal phosphate group between ATP and AMP. Plays an important role in cellular energy homeostasis and in adenine nucleotide metabolism. This is Probable adenylate kinase 2, chloroplastic from Oryza sativa subsp. japonica (Rice).